A 746-amino-acid polypeptide reads, in one-letter code: Exostosin-1 (746 aa).

Over 1–7 the chain is Cytoplasmic; that stretch reads MQAKKRY. Residues 8–28 form a helical; Signal-anchor for type II membrane protein membrane-spanning segment; the sequence is FILLSAGSCLALLFYFGGLQF. The Lumenal portion of the chain corresponds to 29–746; it reads RASRSHSRRE…RKKYRDIERL (718 aa). Asparagine 89 carries an N-linked (GlcNAc...) asparagine glycan. 2 disulfide bridges follow: cysteine 98–cysteine 103 and cysteine 109–cysteine 152. Residues leucine 166 and tyrosine 203 each coordinate a protein. UDP is bound by residues lysine 267, lysine 269, tyrosine 271, and arginine 280. An intrachain disulfide couples cysteine 298 to cysteine 312. A protein is bound at residue histidine 300. Positions 319 and 324 each coordinate UDP. N-linked (GlcNAc...) asparagine glycosylation occurs at asparagine 330. Cystine bridges form between cysteine 334–cysteine 355 and cysteine 652–cysteine 704. Positions 346 and 349 each coordinate UDP.

This sequence belongs to the glycosyltransferase 47 family. As to quaternary structure, part of the heparan sulfate polymerase, a dimeric complex composed of EXT1 and EXT2. Could also form homooligomeric complexes. Interacts with NDST1. Post-translationally, N-glycosylated.

The protein localises to the golgi apparatus membrane. Its subcellular location is the golgi apparatus. It localises to the cis-Golgi network membrane. The protein resides in the endoplasmic reticulum membrane. It catalyses the reaction 3-O-{alpha-D-GlcNAc-[(1-&gt;4)-beta-D-GlcA-(1-&gt;4)-alpha-D-GlcNAc](n)-(1-&gt;4)-beta-D-GlcA-(1-&gt;3)-beta-D-Gal-(1-&gt;3)-beta-D-Gal-(1-&gt;4)-beta-D-Xyl}-L-seryl-[protein] + UDP-alpha-D-glucuronate = 3-O-{[(1-&gt;4)-beta-D-GlcA-(1-&gt;4)-alpha-D-GlcNAc](n+1)-(1-&gt;4)-beta-D-GlcA-(1-&gt;3)-beta-D-Gal-(1-&gt;3)-beta-D-Gal-(1-&gt;4)-beta-D-Xyl}-L-seryl-[protein] + UDP + H(+). Its pathway is protein modification; protein glycosylation. Its function is as follows. Glycosyltransferase forming with EXT2 the heterodimeric heparan sulfate polymerase which catalyzes the elongation of the heparan sulfate glycan backbone. Glycan backbone extension consists in the alternating transfer of (1-&gt;4)-beta-D-GlcA and (1-&gt;4)-alpha-D-GlcNAc residues from their respective UDP-sugar donors. Both EXT1 and EXT2 are required for the full activity of the polymerase since EXT1 bears the N-acetylglucosaminyl-proteoglycan 4-beta-glucuronosyltransferase activity within the complex while EXT2 carries the glucuronosyl-N-acetylglucosaminyl-proteoglycan 4-alpha-N-acetylglucosaminyltransferase activity. Heparan sulfate proteoglycans are ubiquitous components of the extracellular matrix and play an important role in tissue homeostasis and signaling. In Pongo abelii (Sumatran orangutan), this protein is Exostosin-1 (EXT1).